The sequence spans 175 residues: MEARLLSNVCGFFLVFLLQAESTRVELVPEKIAGFWKEVAVASDQKLVLKAQRRVEGLFLTFSGGNVTVKAVYNSSGSCVTESSLGSERDTVGEFAFPGNREIHVLDTDYERYTILKLTLLWQGRNFHVLKYFTRSLENEDEPGFWLFREMTADQGLYMLARHGRCAELLKEGLV.

The first 22 residues, 1 to 22 (MEARLLSNVCGFFLVFLLQAES), serve as a signal peptide directing secretion. 2 N-linked (GlcNAc...) asparagine glycosylation sites follow: Asn-66 and Asn-74. Cys-79 and Cys-166 are joined by a disulfide.

It belongs to the calycin superfamily. Lipocalin family. In terms of tissue distribution, predominantly expressed in epididymis.

Its subcellular location is the secreted. Functionally, may play a role in male fertility. May act as a retinoid carrier protein within the epididymis. This is Epididymal-specific lipocalin-8 (Lcn8) from Mus musculus (Mouse).